A 280-amino-acid polypeptide reads, in one-letter code: Ribonuclease Z (280 aa).

Zn(2+) contacts are provided by histidine 61, histidine 63, aspartate 65, histidine 66, histidine 153, aspartate 176, and histidine 240. Aspartate 65 acts as the Proton acceptor in catalysis.

It belongs to the RNase Z family. Homodimer. It depends on Zn(2+) as a cofactor.

The catalysed reaction is Endonucleolytic cleavage of RNA, removing extra 3' nucleotides from tRNA precursor, generating 3' termini of tRNAs. A 3'-hydroxy group is left at the tRNA terminus and a 5'-phosphoryl group is left at the trailer molecule.. Zinc phosphodiesterase, which displays some tRNA 3'-processing endonuclease activity. Probably involved in tRNA maturation, by removing a 3'-trailer from precursor tRNA. The chain is Ribonuclease Z from Mycobacterium avium (strain 104).